The sequence spans 449 residues: Uridine-cytidine kinase C (449 aa).

58 to 65 (GPSGAGKT) serves as a coordination point for ATP. In terms of domain architecture, CYTH spans 235–401 (NPIYILKSVK…QKSYIELYQD (167 aa)).

It belongs to the uridine kinase family.

It catalyses the reaction uridine + ATP = UMP + ADP + H(+). The enzyme catalyses cytidine + ATP = CMP + ADP + H(+). Its pathway is pyrimidine metabolism; CTP biosynthesis via salvage pathway; CTP from cytidine: step 1/3. It participates in pyrimidine metabolism; UMP biosynthesis via salvage pathway; UMP from uridine: step 1/1. Catalyzes the conversion of uridine into uridine monophosphate and cytidine into cytidine monophosphate in the pyrimidine salvage pathway. This is Uridine-cytidine kinase C (udkC) from Dictyostelium discoideum (Social amoeba).